Reading from the N-terminus, the 1222-residue chain is DNA-directed RNA polymerase II subunit RPB2 (1222 aa).

Aspartate 835 provides a ligand contact to Mg(2+). Zn(2+) is bound by residues cysteine 1161, cysteine 1164, cysteine 1180, and cysteine 1183. A C4-type zinc finger spans residues 1161 to 1183; the sequence is CGICGLMTVVAKLKHNQFECRGC.

This sequence belongs to the RNA polymerase beta chain family. Component of the RNA polymerase II (Pol II) complex consisting of 12 subunits.

The protein resides in the nucleus. The catalysed reaction is RNA(n) + a ribonucleoside 5'-triphosphate = RNA(n+1) + diphosphate. Its function is as follows. DNA-dependent RNA polymerase catalyzes the transcription of DNA into RNA using the four ribonucleoside triphosphates as substrates. Second largest component of RNA polymerase II which synthesizes mRNA precursors and many functional non-coding RNAs. Proposed to contribute to the polymerase catalytic activity and forms the polymerase active center together with the largest subunit. Pol II is the central component of the basal RNA polymerase II transcription machinery. It is composed of mobile elements that move relative to each other. RPB2 is part of the core element with the central large cleft, the clamp element that moves to open and close the cleft and the jaws that are thought to grab the incoming DNA template. The polypeptide is DNA-directed RNA polymerase II subunit RPB2 (RPB2) (Eremothecium gossypii (strain ATCC 10895 / CBS 109.51 / FGSC 9923 / NRRL Y-1056) (Yeast)).